We begin with the raw amino-acid sequence, 2615 residues long: Probable serine/threonine-protein kinase roco7 (2615 aa).

Residues 1-13 (MDGYSSLSSSGNS) show a composition bias toward low complexity. Disordered stretches follow at residues 1–35 (MDGY…NYNQ), 275–297 (STPT…NSNN), 533–623 (QNIN…GGLN), and 946–998 (SSSS…ISEQ). Composition is skewed to low complexity over residues 533 to 560 (QNIN…SSRS), 567 to 614 (NSST…NNNN), and 946 to 996 (SSSS…SNIS). The COR domain occupies 1441 to 1631 (SVKEAYARNK…LCIWQNGMVL (191 aa)). Positions 1775–2042 (LKFGPQLGSG…ERLSTMQKTF (268 aa)) constitute a Protein kinase domain. Residues 1781 to 1789 (LGSGSYANV) and Lys-1802 each bind ATP. The active-site Proton acceptor is Asp-1899. 2 disordered regions span residues 2061-2158 (QINQ…SHSG) and 2176-2209 (GIGS…YESG). Low complexity-rich tracts occupy residues 2073–2158 (SQAA…SHSG) and 2182–2209 (NQHQ…YESG). 2 WD repeats span residues 2491–2527 (GIIK…LVWD) and 2533–2574 (RMVQ…TTYS).

This sequence belongs to the protein kinase superfamily. TKL Ser/Thr protein kinase family. ROCO subfamily.

It catalyses the reaction L-seryl-[protein] + ATP = O-phospho-L-seryl-[protein] + ADP + H(+). The enzyme catalyses L-threonyl-[protein] + ATP = O-phospho-L-threonyl-[protein] + ADP + H(+). The sequence is that of Probable serine/threonine-protein kinase roco7 (roco7) from Dictyostelium discoideum (Social amoeba).